Reading from the N-terminus, the 261-residue chain is GTP cyclohydrolase FolE2 (261 aa).

It belongs to the GTP cyclohydrolase IV family.

The catalysed reaction is GTP + H2O = 7,8-dihydroneopterin 3'-triphosphate + formate + H(+). It participates in cofactor biosynthesis; 7,8-dihydroneopterin triphosphate biosynthesis; 7,8-dihydroneopterin triphosphate from GTP: step 1/1. Converts GTP to 7,8-dihydroneopterin triphosphate. The sequence is that of GTP cyclohydrolase FolE2 from Geobacter metallireducens (strain ATCC 53774 / DSM 7210 / GS-15).